The following is a 267-amino-acid chain: Small ribosomal subunit protein uS2 (267 aa).

Positions 232–267 are disordered; that stretch reads ATVREEEFADAPAEDAKPARRAPAKKAAADKGEAQA. Over residues 258 to 267 the composition is skewed to basic and acidic residues; it reads AAADKGEAQA.

This sequence belongs to the universal ribosomal protein uS2 family.

In Stenotrophomonas maltophilia (strain R551-3), this protein is Small ribosomal subunit protein uS2.